A 422-amino-acid polypeptide reads, in one-letter code: Glutamate-1-semialdehyde 2,1-aminomutase (422 aa).

Residue Lys-258 is modified to N6-(pyridoxal phosphate)lysine.

Belongs to the class-III pyridoxal-phosphate-dependent aminotransferase family. HemL subfamily. As to quaternary structure, homodimer. It depends on pyridoxal 5'-phosphate as a cofactor.

Its subcellular location is the cytoplasm. The catalysed reaction is (S)-4-amino-5-oxopentanoate = 5-aminolevulinate. The protein operates within porphyrin-containing compound metabolism; protoporphyrin-IX biosynthesis; 5-aminolevulinate from L-glutamyl-tRNA(Glu): step 2/2. The chain is Glutamate-1-semialdehyde 2,1-aminomutase from Chlamydia trachomatis serovar L2 (strain ATCC VR-902B / DSM 19102 / 434/Bu).